The primary structure comprises 340 residues: Cytochrome c peroxidase, mitochondrial (340 aa).

The transit peptide at 1–17 directs the protein to the mitochondrion; the sequence is MRSFRAVRNFSTTAKRL. His-101 functions as the Proton acceptor in the catalytic mechanism. The disordered stretch occupies residues 175–198; that stretch reads WKRGRVDEPESASPPDGSLPDASQ. Residue His-224 participates in heme b binding. Trp-240 serves as the catalytic Tryptophan radical intermediate.

Belongs to the peroxidase family. Cytochrome c peroxidase subfamily. Forms a one-to-one complex with cytochrome c. Heme b serves as cofactor.

The protein resides in the mitochondrion matrix. The protein localises to the mitochondrion intermembrane space. The enzyme catalyses 2 Fe(II)-[cytochrome c] + H2O2 + 2 H(+) = 2 Fe(III)-[cytochrome c] + 2 H2O. Destroys radicals which are normally produced within the cells and which are toxic to biological systems. This is Cytochrome c peroxidase, mitochondrial (CCP1) from Yarrowia lipolytica (strain CLIB 122 / E 150) (Yeast).